A 142-amino-acid chain; its full sequence is Sec-independent protein translocase protein TatB (142 aa).

A helical membrane pass occupies residues 2–22; sequence FANVGWGEMLVLVIAGLVILG. The tract at residues 89–142 is disordered; that stretch reads DDSIFTGKFDQNGKSEKPEQKPEKPQSAPGPAAAVPDQPAGGRSGSTPYDTDAT. A compositionally biased stretch (basic and acidic residues) spans 99 to 112; the sequence is QNGKSEKPEQKPEK. The segment covering 133–142 has biased composition (polar residues); it reads GSTPYDTDAT.

It belongs to the TatB family. As to quaternary structure, the Tat system comprises two distinct complexes: a TatABC complex, containing multiple copies of TatA, TatB and TatC subunits, and a separate TatA complex, containing only TatA subunits. Substrates initially bind to the TatABC complex, which probably triggers association of the separate TatA complex to form the active translocon.

It is found in the cell membrane. Functionally, part of the twin-arginine translocation (Tat) system that transports large folded proteins containing a characteristic twin-arginine motif in their signal peptide across membranes. Together with TatC, TatB is part of a receptor directly interacting with Tat signal peptides. TatB may form an oligomeric binding site that transiently accommodates folded Tat precursor proteins before their translocation. This chain is Sec-independent protein translocase protein TatB, found in Mycolicibacterium vanbaalenii (strain DSM 7251 / JCM 13017 / BCRC 16820 / KCTC 9966 / NRRL B-24157 / PYR-1) (Mycobacterium vanbaalenii).